The sequence spans 182 residues: Ribosome maturation factor RimM (182 aa).

The PRC barrel domain occupies 101-174 (QDEYFIHQLY…QIVVRLLPGL (74 aa)).

This sequence belongs to the RimM family. In terms of assembly, binds ribosomal protein uS19.

The protein resides in the cytoplasm. An accessory protein needed during the final step in the assembly of 30S ribosomal subunit, possibly for assembly of the head region. Essential for efficient processing of 16S rRNA. May be needed both before and after RbfA during the maturation of 16S rRNA. It has affinity for free ribosomal 30S subunits but not for 70S ribosomes. This is Ribosome maturation factor RimM from Roseiflexus sp. (strain RS-1).